We begin with the raw amino-acid sequence, 234 residues long: Phosphoribosylaminoimidazole-succinocarboxamide synthase (234 aa).

This sequence belongs to the SAICAR synthetase family.

The enzyme catalyses 5-amino-1-(5-phospho-D-ribosyl)imidazole-4-carboxylate + L-aspartate + ATP = (2S)-2-[5-amino-1-(5-phospho-beta-D-ribosyl)imidazole-4-carboxamido]succinate + ADP + phosphate + 2 H(+). It participates in purine metabolism; IMP biosynthesis via de novo pathway; 5-amino-1-(5-phospho-D-ribosyl)imidazole-4-carboxamide from 5-amino-1-(5-phospho-D-ribosyl)imidazole-4-carboxylate: step 1/2. The chain is Phosphoribosylaminoimidazole-succinocarboxamide synthase from Pyrobaculum aerophilum (strain ATCC 51768 / DSM 7523 / JCM 9630 / CIP 104966 / NBRC 100827 / IM2).